Consider the following 96-residue polypeptide: Putative membrane protein insertion efficiency factor (96 aa).

Residues threonine 71 to proline 84 show a composition bias toward low complexity. The tract at residues threonine 71–proline 96 is disordered.

It belongs to the UPF0161 family.

The protein resides in the cell inner membrane. Functionally, could be involved in insertion of integral membrane proteins into the membrane. The protein is Putative membrane protein insertion efficiency factor of Cupriavidus metallidurans (strain ATCC 43123 / DSM 2839 / NBRC 102507 / CH34) (Ralstonia metallidurans).